Consider the following 337-residue polypeptide: Serpentine receptor class beta-6 (337 aa).

7 consecutive transmembrane segments (helical) span residues 20–40 (QFYT…LIIF), 62–82 (ILIS…IPFL), 98–118 (IFQN…LGIT), 138–158 (IGVF…YFFF), 183–203 (WLCY…YFLV), 234–254 (TFIS…TLII), and 273–293 (GVYI…CVIL).

This sequence belongs to the nematode receptor-like protein srb family. As to expression, expressed in the ADL, ADF and ASH chemosensory neurons in the head and in the PHA and PHB chemosensory neurons in the tail. Low expression also observed in the egg-laying structures in the mid-body region.

It is found in the cell membrane. Functionally, mediates recognition and avoidance of Streptomyces species by detecting dodecanoic acid secreted by the bacteria. Also mediates avoidance of decanoic acid which is not secreted by Streptomyces species but this may represent an additional important avoidance response in the environment. This Caenorhabditis elegans protein is Serpentine receptor class beta-6 (srb-6).